Reading from the N-terminus, the 430-residue chain is Adenylosuccinate synthetase (430 aa).

Residues 12–18 and 40–42 contribute to the GTP site; these read GDEGKGK and GHT. The Proton acceptor role is filled by Asp-13. Mg(2+) contacts are provided by Asp-13 and Gly-40. Residues 13 to 16, 38 to 41, Thr-130, Arg-144, Gln-224, and Thr-239 each bind IMP; these read DEGK and NAGH. His-41 serves as the catalytic Proton donor. The tract at residues 277–297 is disordered; that stretch reads PFPTEQDNETGRKIGERGREF. Positions 285–296 are enriched in basic and acidic residues; sequence ETGRKIGERGRE. 299-305 contributes to the substrate binding site; the sequence is TNTGRPR. Arg-303 is a binding site for IMP. GTP contacts are provided by residues Arg-305, 331 to 333, and 413 to 415; these read KLD and STS.

The protein belongs to the adenylosuccinate synthetase family. As to quaternary structure, homodimer. Mg(2+) serves as cofactor.

It localises to the cytoplasm. The catalysed reaction is IMP + L-aspartate + GTP = N(6)-(1,2-dicarboxyethyl)-AMP + GDP + phosphate + 2 H(+). Its pathway is purine metabolism; AMP biosynthesis via de novo pathway; AMP from IMP: step 1/2. Functionally, plays an important role in the de novo pathway of purine nucleotide biosynthesis. Catalyzes the first committed step in the biosynthesis of AMP from IMP. In Bradyrhizobium sp. (strain ORS 278), this protein is Adenylosuccinate synthetase.